The sequence spans 86 residues: Probable acyl carrier protein CCNA_01221 (86 aa).

Residues 6–83 (TVTDLSLREI…DLSKLINDLR (78 aa)) form the Carrier domain. Serine 43 is subject to O-(pantetheine 4'-phosphoryl)serine.

The protein belongs to the acyl carrier protein (ACP) family.

The protein operates within lipid metabolism; sphingolipid metabolism. Its function is as follows. Involved in de novo bacterial ceramide synthesis. The protein is Probable acyl carrier protein CCNA_01221 of Caulobacter vibrioides (strain NA1000 / CB15N) (Caulobacter crescentus).